Consider the following 494-residue polypeptide: DUF21 domain-containing protein At4g14240 (494 aa).

The Extracellular portion of the chain corresponds to 1 to 43 (MHLINAVAAARILSGIGQSNGNNGGEAIPFGSFEWITYAGISC). A CNNM transmembrane domain is found at 31–213 (GSFEWITYAG…GKGGELTHDE (183 aa)). A helical membrane pass occupies residues 44–64 (FLVLFAGIMSGLTLGLMSLGL). Over 65-93 (VELEILQRSGTPNEKKQAAAIFPVVQKQH) the chain is Cytoplasmic. A helical membrane pass occupies residues 94-114 (QLLVTLLLCNAMAMEGLPIYL). At 115–121 (DKLFNEY) the chain is on the extracellular side. The helical transmembrane segment at 122–142 (VAIILSVTFVLAFGEVIPQAI) threads the bilayer. At 143–159 (CTRYGLAVGANFVWLVR) the chain is on the cytoplasmic side. Residues 160 to 180 (ILMTLCYPIAFPIGKILDLVL) traverse the membrane as a helical segment. The Extracellular portion of the chain corresponds to 181-494 (GHNDALFRRA…TITEPIRRNN (314 aa)). 3 CBS domains span residues 232–292 (MTPI…TETL), 297–352 (CIRR…SNDS), and 364–425 (GNHD…IVDE). 2 N-linked (GlcNAc...) asparagine glycosylation sites follow: Asn350 and Asn385. The interval 459–494 (QKGTGGQNKQGQTNKVPGQEQDKMLGTITEPIRRNN) is disordered.

Its subcellular location is the membrane. In Arabidopsis thaliana (Mouse-ear cress), this protein is DUF21 domain-containing protein At4g14240 (CBSDUF1).